Here is a 122-residue protein sequence, read N- to C-terminus: Large ribosomal subunit protein uL14c (122 aa).

It belongs to the universal ribosomal protein uL14 family. Part of the 50S ribosomal subunit.

The protein localises to the plastid. It is found in the chloroplast. Functionally, binds to 23S rRNA. The sequence is that of Large ribosomal subunit protein uL14c from Liriodendron tulipifera (Tuliptree).